Reading from the N-terminus, the 127-residue chain is Ribonuclease P protein component (127 aa).

The protein belongs to the RnpA family. In terms of assembly, consists of a catalytic RNA component (M1 or rnpB) and a protein subunit.

The enzyme catalyses Endonucleolytic cleavage of RNA, removing 5'-extranucleotides from tRNA precursor.. Functionally, RNaseP catalyzes the removal of the 5'-leader sequence from pre-tRNA to produce the mature 5'-terminus. It can also cleave other RNA substrates such as 4.5S RNA. The protein component plays an auxiliary but essential role in vivo by binding to the 5'-leader sequence and broadening the substrate specificity of the ribozyme. The chain is Ribonuclease P protein component from Agrobacterium fabrum (strain C58 / ATCC 33970) (Agrobacterium tumefaciens (strain C58)).